A 332-amino-acid polypeptide reads, in one-letter code: Methionine synthase (332 aa).

Residues His211, Cys213, and Cys296 each coordinate Zn(2+).

It belongs to the archaeal MetE family. Zn(2+) is required as a cofactor.

It functions in the pathway amino-acid biosynthesis; L-methionine biosynthesis via de novo pathway. Its function is as follows. Catalyzes the transfer of a methyl group to L-homocysteine resulting in methionine formation. The physiological methyl donor is unknown. This chain is Methionine synthase, found in Saccharolobus solfataricus (strain ATCC 35092 / DSM 1617 / JCM 11322 / P2) (Sulfolobus solfataricus).